A 466-amino-acid polypeptide reads, in one-letter code: GATA-binding factor 2 (466 aa).

Low complexity-rich tracts occupy residues 139-155 (GSST…TPAS) and 174-188 (PDPN…SSSA). The tract at residues 139–196 (GSSTSSTASVSSLTPASHSGSHLFGFPPTPPKEVSPDPNSTSAASPSSSAGARQEDKD) is disordered. GATA-type zinc fingers lie at residues 281-305 (CVNC…CNAC) and 335-359 (CANC…CNAC). Residues 436-466 (GHILPTPTPIHPSSSISFGHPHPSSMVTAMG) form a disordered region.

Expressed in all developmental stages of erythroid cells but is additionally found in a limited subset of other tissues.

It is found in the nucleus. In terms of biological role, transcriptional activator which probably serves as a general switch factor for cell-specific development. It binds to DNA sites with the consensus sequence 5'-[AT]GATA[AG]-3' within regulatory regions of genes. This Gallus gallus (Chicken) protein is GATA-binding factor 2 (GATA2).